The chain runs to 192 residues: Holliday junction branch migration complex subunit RuvA (192 aa).

The interval 1-61 (MFEYLKGIVA…DTGITLYGFL (61 aa)) is domain I. The domain II stretch occupies residues 62–137 (SLEDKELFLK…KLGDYVKKSA (76 aa)). A flexible linker region spans residues 137-140 (AVAT). Residues 141–192 (DLTPSLQDALLALVALGYTQKEVDRITPKLAKLPENTADGYIKEALALLLKK) are domain III.

This sequence belongs to the RuvA family. As to quaternary structure, homotetramer. Forms an RuvA(8)-RuvB(12)-Holliday junction (HJ) complex. HJ DNA is sandwiched between 2 RuvA tetramers; dsDNA enters through RuvA and exits via RuvB. An RuvB hexamer assembles on each DNA strand where it exits the tetramer. Each RuvB hexamer is contacted by two RuvA subunits (via domain III) on 2 adjacent RuvB subunits; this complex drives branch migration. In the full resolvosome a probable DNA-RuvA(4)-RuvB(12)-RuvC(2) complex forms which resolves the HJ.

It localises to the cytoplasm. Its function is as follows. The RuvA-RuvB-RuvC complex processes Holliday junction (HJ) DNA during genetic recombination and DNA repair, while the RuvA-RuvB complex plays an important role in the rescue of blocked DNA replication forks via replication fork reversal (RFR). RuvA specifically binds to HJ cruciform DNA, conferring on it an open structure. The RuvB hexamer acts as an ATP-dependent pump, pulling dsDNA into and through the RuvAB complex. HJ branch migration allows RuvC to scan DNA until it finds its consensus sequence, where it cleaves and resolves the cruciform DNA. The chain is Holliday junction branch migration complex subunit RuvA from Lactobacillus gasseri (strain ATCC 33323 / DSM 20243 / BCRC 14619 / CIP 102991 / JCM 1131 / KCTC 3163 / NCIMB 11718 / NCTC 13722 / AM63).